The chain runs to 247 residues: PF03932 family protein CutC (247 aa).

This sequence belongs to the CutC family.

It localises to the cytoplasm. This is PF03932 family protein CutC from Chromobacterium violaceum (strain ATCC 12472 / DSM 30191 / JCM 1249 / CCUG 213 / NBRC 12614 / NCIMB 9131 / NCTC 9757 / MK).